The sequence spans 121 residues: Small ribosomal subunit protein uS10 (121 aa).

Serine 2 carries the post-translational modification N-acetylserine. Residues lysine 6, lysine 8, lysine 21, lysine 32, and lysine 101 each participate in a glycyl lysine isopeptide (Lys-Gly) (interchain with G-Cter in ubiquitin) cross-link.

It belongs to the universal ribosomal protein uS10 family. In terms of assembly, component of the small ribosomal subunit (SSU). Mature yeast ribosomes consist of a small (40S) and a large (60S) subunit. The 40S small subunit contains 1 molecule of ribosomal RNA (18S rRNA) and 33 different proteins (encoded by 57 genes). The large 60S subunit contains 3 rRNA molecules (25S, 5.8S and 5S rRNA) and 46 different proteins (encoded by 81 genes). In terms of processing, ubiquitinated at Lys-6 and Lys-8 by HEL2, to activate the ribosome quality control (RQC) pathway in response to stalled ribosomes. N-terminally acetylated by acetyltransferase NatA. Also partially acetylated by NatC.

It localises to the cytoplasm. Functionally, component of the ribosome, a large ribonucleoprotein complex responsible for the synthesis of proteins in the cell. The small ribosomal subunit (SSU) binds messenger RNAs (mRNAs) and translates the encoded message by selecting cognate aminoacyl-transfer RNA (tRNA) molecules. The large subunit (LSU) contains the ribosomal catalytic site termed the peptidyl transferase center (PTC), which catalyzes the formation of peptide bonds, thereby polymerizing the amino acids delivered by tRNAs into a polypeptide chain. The nascent polypeptides leave the ribosome through a tunnel in the LSU and interact with protein factors that function in enzymatic processing, targeting, and the membrane insertion of nascent chains at the exit of the ribosomal tunnel. This Saccharomyces cerevisiae (strain ATCC 204508 / S288c) (Baker's yeast) protein is Small ribosomal subunit protein uS10.